Here is a 62-residue protein sequence, read N- to C-terminus: DNA-directed RNA polymerase subunit Rpo10 (62 aa).

4 residues coordinate Zn(2+): cysteine 6, cysteine 9, cysteine 43, and cysteine 44.

This sequence belongs to the archaeal Rpo10/eukaryotic RPB10 RNA polymerase subunit family. In terms of assembly, part of the RNA polymerase complex. Requires Zn(2+) as cofactor.

Its subcellular location is the cytoplasm. It carries out the reaction RNA(n) + a ribonucleoside 5'-triphosphate = RNA(n+1) + diphosphate. In terms of biological role, DNA-dependent RNA polymerase (RNAP) catalyzes the transcription of DNA into RNA using the four ribonucleoside triphosphates as substrates. The protein is DNA-directed RNA polymerase subunit Rpo10 of Methanospirillum hungatei JF-1 (strain ATCC 27890 / DSM 864 / NBRC 100397 / JF-1).